Reading from the N-terminus, the 530-residue chain is UDP-glucuronosyltransferase 2B7 (530 aa).

Residues 1-17 (MPQKWISALLLLQISFC) form the signal peptide. A glycan (N-linked (GlcNAc...) asparagine) is linked at N316. UDP-alpha-D-glucuronate-binding positions include 374 to 380 (THGGANG) and E400. Residues 496–516 (IGFLLACVLAIVLLAVKCCLF) traverse the membrane as a helical segment.

Belongs to the UDP-glycosyltransferase family.

Its subcellular location is the endoplasmic reticulum membrane. It catalyses the reaction glucuronate acceptor + UDP-alpha-D-glucuronate = acceptor beta-D-glucuronoside + UDP + H(+). The enzyme catalyses 17alpha-estradiol + UDP-alpha-D-glucuronate = 17alpha-estradiol 17-O-(beta-D-glucuronate) + UDP + H(+). The catalysed reaction is 17beta-estradiol + UDP-alpha-D-glucuronate = 17beta-estradiol 17-O-(beta-D-glucuronate) + UDP + H(+). It carries out the reaction 2-hydroxy-17beta-estradiol + UDP-alpha-D-glucuronate = 2-hydroxy-17beta-estradiol 3-O-(beta-D-glucuronate) + UDP + H(+). It catalyses the reaction 4-hydroxy-17beta-estradiol + UDP-alpha-D-glucuronate = 17beta-estradiol 4-O-(beta-D-glucuronate) + UDP + H(+). The enzyme catalyses 4-hydroxyestrone + UDP-alpha-D-glucuronate = estrone 4-O-(beta-D-glucuronate) + UDP + H(+). The catalysed reaction is 16alpha-hydroxyestrone + UDP-alpha-D-glucuronate = 16alpha-hydroxyestrone 16-O-(beta-D-glucuronate) + UDP + H(+). It carries out the reaction 16alpha,17beta-estriol + UDP-alpha-D-glucuronate = 16alpha,17beta-estriol 16-O-(beta-D-glucuronate) + UDP + H(+). It catalyses the reaction 16beta,17beta-estriol + UDP-alpha-D-glucuronate = 16beta,17beta-estriol 16-O-(beta-D-glucuronate) + UDP + H(+). The enzyme catalyses 16alpha,17alpha-estriol + UDP-alpha-D-glucuronate = 16alpha,17alpha-estriol 16-O-(beta-D-glucuronate) + UDP + H(+). The catalysed reaction is 16alpha,17alpha-estriol + UDP-alpha-D-glucuronate = 16alpha,17alpha-estriol 17-O-(beta-D-glucuronate) + UDP + H(+). It carries out the reaction epitestosterone + UDP-alpha-D-glucuronate = epitestosterone 17-O-(beta-D-glucuronate) + UDP + H(+). It catalyses the reaction hyodeoxycholate + UDP-alpha-D-glucuronate = hyodeoxycholate 6-O-(beta-D-glucuronate) + UDP + H(+). The enzyme catalyses hyocholate + UDP-alpha-D-glucuronate = hyocholate 6-O-(beta-D-glucuronate) + UDP + H(+). The catalysed reaction is all-trans-retinoate + UDP-alpha-D-glucuronate = all-trans-retinoyl-1-O-(beta-D-glucuronate) + UDP. It carries out the reaction all-trans-4-hydroxyretinoate + UDP-alpha-D-glucuronate = all-trans-4-hydroxy-4-O-(beta-D-glucuronide)-retinoate + UDP + H(+). It catalyses the reaction (E)-ferulate + UDP-alpha-D-glucuronate = (E)-ferulic acid beta-D-glucuronate ester + UDP. The enzyme catalyses 8-iso-prostaglandin F2alpha + UDP-alpha-D-glucuronate = 8-iso-prostaglandin F2alpha-glucuronide + UDP + H(+). The catalysed reaction is 5-epi-5-F2t-IsoP + UDP-alpha-D-glucuronate = 5-epi-5-F2t-IsoP-glucuronide + UDP + H(+). It carries out the reaction (5Z,8Z,11Z,14Z)-eicosatetraenoate + UDP-alpha-D-glucuronate = O-[(5Z),(8Z),(11Z),(14Z)-eicosatetraenoyl]-beta-D-glucuronate + UDP. It catalyses the reaction 15-hydroxy-(5Z,8Z,11Z,13E)-eicosatetraenoate + UDP-alpha-D-glucuronate = 15-O-(beta-D-glucuronosyl)-(5Z,8Z,11Z,14Z)-eicosatetraenoate + UDP + H(+). The enzyme catalyses 20-hydroxy-(5Z,8Z,11Z,14Z)-eicosatetraenoate + UDP-alpha-D-glucuronate = 20-O-(beta-D-glucuronosyl)-(5Z,8Z,11Z,14Z)-eicosatetraenoate + UDP + H(+). The catalysed reaction is (E)-ferulate + UDP-alpha-D-glucuronate = (E)-4-O-(beta-D-glucuronosyl)-ferulate + UDP + H(+). It carries out the reaction prostaglandin B1 + UDP-alpha-D-glucuronate = 15-O-(beta-D-glucuronosyl)-prostaglandin B1 + UDP + H(+). It catalyses the reaction mycophenolate + UDP-alpha-D-glucuronate = mycophenolic acid O-acyl-beta-D-glucuronide + UDP. The enzyme catalyses losartan + UDP-alpha-D-glucuronate = losartan-2-N-beta-D-glucuronide + UDP. The catalysed reaction is candesartan + UDP-alpha-D-glucuronate = candesartan O-beta-D-glucuronoside + UDP. It carries out the reaction candesartan + UDP-alpha-D-glucuronate = candesartan-2-N-beta-D-glucuronide + UDP. It catalyses the reaction zolasartan + UDP-alpha-D-glucuronate = zolarsartan O-beta-D-glucuronoside + UDP. In terms of biological role, UDP-glucuronosyltransferase (UGT) that catalyzes phase II biotransformation reactions in which lipophilic substrates are conjugated with glucuronic acid to increase the metabolite's water solubility, thereby facilitating excretion into either the urine or bile. Essential for the elimination and detoxification of drugs, xenobiotics and endogenous compounds. Catalyzes the glucuronidation of endogenous steroid hormones such as androgens (epitestosterone, androsterone) and estrogens (estradiol, epiestradiol, estriol, catechol estrogens). Also regulates the levels of retinoic acid, a major metabolite of vitamin A involved in apoptosis, cellular growth and differentiation, and embryonic development. Contributes to bile acid (BA) detoxification by catalyzing the glucuronidation of BA substrates, which are natural detergents for dietary lipids absorption. Involved in the glucuronidation of arachidonic acid (AA) and AA-derived eicosanoids including 15-HETE, 20-HETE, PGE2, PGB1 and F2-isoprostanes (8-iso-PGF2alpha and 5-epi-5-F2t-IsoP). Involved in the glucuronidation of the phytochemical ferulic acid at the phenolic or the carboxylic acid group. Involved in the glucuronidation of the AGTR1 angiotensin receptor antagonist losartan, caderastan and zolarsatan, drugs which can inhibit the effect of angiotensin II. Also metabolizes mycophenolate, an immunosuppressive agent. The protein is UDP-glucuronosyltransferase 2B7 of Rattus norvegicus (Rat).